The chain runs to 162 residues: Interleukin-15 (162 aa).

Positions 1-29 (MRISKPSLRSTSIQCYLCFLLNSHLITEA) are cleaved as a signal peptide. The propeptide occupies 30-48 (GIHVFVWGCISAGLPKTEA). Disulfide bonds link C83–C133 and C90–C136. Residues N119 and N127 are each glycosylated (N-linked (GlcNAc...) asparagine).

It belongs to the IL-15/IL-21 family.

The protein localises to the secreted. Its function is as follows. Cytokine that plays a major role in the development of inflammatory and protective immune responses to microbial invaders and parasites by modulating immune cells of both the innate and adaptive immune systems. Stimulates the proliferation of natural killer cells, T-cells and B-cells and promotes the secretion of several cytokines. In monocytes, induces the production of IL8 and monocyte chemotactic protein 1/CCL2, two chemokines that attract neutrophils and monocytes respectively to sites of infection. Unlike most cytokines, which are secreted in soluble form, IL15 is expressed in association with its high affinity IL15RA on the surface of IL15-producing cells and delivers signals to target cells that express IL2RB and IL2RG receptor subunits. Binding to its receptor triggers the phosphorylation of JAK1 and JAK3 and the recruitment and subsequent phosphorylation of signal transducer and activator of transcription-3/STAT3 and STAT5. In mast cells, induces the rapid tyrosine phosphorylation of STAT6 and thereby controls mast cell survival and release of cytokines such as IL4. This Cavia porcellus (Guinea pig) protein is Interleukin-15 (IL15).